A 347-amino-acid polypeptide reads, in one-letter code: GTP 3',8-cyclase (347 aa).

One can recognise a Radical SAM core domain in the interval 10–242 (RLNRPIGVLR…ERINARWPLE (233 aa)). GTP is bound at residue Arg19. Residues Cys26 and Cys30 each coordinate [4Fe-4S] cluster. Residue Tyr32 coordinates S-adenosyl-L-methionine. Position 33 (Cys33) interacts with [4Fe-4S] cluster. A GTP-binding site is contributed by Arg65. Residue Gly69 coordinates S-adenosyl-L-methionine. Thr104 is a GTP binding site. An S-adenosyl-L-methionine-binding site is contributed by Ser129. GTP is bound at residue Lys178. Position 212 (Met212) interacts with S-adenosyl-L-methionine. The [4Fe-4S] cluster site is built by Cys275 and Cys278. 280-282 (RLR) serves as a coordination point for GTP. Cys292 provides a ligand contact to [4Fe-4S] cluster.

The protein belongs to the radical SAM superfamily. MoaA family. As to quaternary structure, monomer and homodimer. It depends on [4Fe-4S] cluster as a cofactor.

The catalysed reaction is GTP + AH2 + S-adenosyl-L-methionine = (8S)-3',8-cyclo-7,8-dihydroguanosine 5'-triphosphate + 5'-deoxyadenosine + L-methionine + A + H(+). It participates in cofactor biosynthesis; molybdopterin biosynthesis. Its function is as follows. Catalyzes the cyclization of GTP to (8S)-3',8-cyclo-7,8-dihydroguanosine 5'-triphosphate. This is GTP 3',8-cyclase from Synechococcus sp. (strain CC9605).